The following is a 374-amino-acid chain: Tetraacyldisaccharide 4'-kinase (374 aa).

66 to 73 (TAGGTGKT) serves as a coordination point for ATP.

This sequence belongs to the LpxK family.

It carries out the reaction a lipid A disaccharide + ATP = a lipid IVA + ADP + H(+). Its pathway is glycolipid biosynthesis; lipid IV(A) biosynthesis; lipid IV(A) from (3R)-3-hydroxytetradecanoyl-[acyl-carrier-protein] and UDP-N-acetyl-alpha-D-glucosamine: step 6/6. Transfers the gamma-phosphate of ATP to the 4'-position of a tetraacyldisaccharide 1-phosphate intermediate (termed DS-1-P) to form tetraacyldisaccharide 1,4'-bis-phosphate (lipid IVA). This is Tetraacyldisaccharide 4'-kinase from Syntrophus aciditrophicus (strain SB).